Reading from the N-terminus, the 89-residue chain is Small ribosomal subunit protein uS15 (89 aa).

The protein belongs to the universal ribosomal protein uS15 family. Part of the 30S ribosomal subunit. Forms a bridge to the 50S subunit in the 70S ribosome, contacting the 23S rRNA.

One of the primary rRNA binding proteins, it binds directly to 16S rRNA where it helps nucleate assembly of the platform of the 30S subunit by binding and bridging several RNA helices of the 16S rRNA. Functionally, forms an intersubunit bridge (bridge B4) with the 23S rRNA of the 50S subunit in the ribosome. This Bacteroides thetaiotaomicron (strain ATCC 29148 / DSM 2079 / JCM 5827 / CCUG 10774 / NCTC 10582 / VPI-5482 / E50) protein is Small ribosomal subunit protein uS15.